The chain runs to 369 residues: UPF0284 protein cce_1085 (369 aa).

It belongs to the UPF0284 family.

The chain is UPF0284 protein cce_1085 from Crocosphaera subtropica (strain ATCC 51142 / BH68) (Cyanothece sp. (strain ATCC 51142)).